We begin with the raw amino-acid sequence, 155 residues long: Arginine repressor (155 aa).

The protein belongs to the ArgR family.

It localises to the cytoplasm. It participates in amino-acid biosynthesis; L-arginine biosynthesis [regulation]. Regulates arginine biosynthesis genes. In Mannheimia succiniciproducens (strain KCTC 0769BP / MBEL55E), this protein is Arginine repressor.